The chain runs to 332 residues: Putative threonine dehydratase (332 aa).

At lysine 56 the chain carries N6-(pyridoxal phosphate)lysine.

The protein belongs to the serine/threonine dehydratase family. Pyridoxal 5'-phosphate is required as a cofactor.

The enzyme catalyses L-threonine = 2-oxobutanoate + NH4(+). It participates in amino-acid biosynthesis; L-isoleucine biosynthesis; 2-oxobutanoate from L-threonine: step 1/1. This Sinorhizobium fredii (strain NBRC 101917 / NGR234) protein is Putative threonine dehydratase.